Here is a 224-residue protein sequence, read N- to C-terminus: UPF0758 protein PSHAa2643 (224 aa).

Residues 102–224 (IFNSPNAVYD…CVSFAERGLI (123 aa)) form the MPN domain. Zn(2+) is bound by residues H173, H175, and D186. A JAMM motif motif is present at residues 173–186 (HNHPSGIAEPSQAD).

Belongs to the UPF0758 family.

This chain is UPF0758 protein PSHAa2643, found in Pseudoalteromonas translucida (strain TAC 125).